Reading from the N-terminus, the 94-residue chain is C-X-C motif chemokine 11-1 (94 aa).

Residues 1-19 form the signal peptide; the sequence is MKTVTALLLVSLAVVAIEG. Disulfide bonds link cysteine 27–cysteine 54 and cysteine 29–cysteine 71.

The protein belongs to the intercrine alpha (chemokine CxC) family.

It is found in the secreted. Functionally, ligand for cxcr3.2. Chemotactic for macrophages. This Danio rerio (Zebrafish) protein is C-X-C motif chemokine 11-1 (cxcl11.1).